The primary structure comprises 425 residues: Proline--tRNA ligase (425 aa).

It belongs to the class-II aminoacyl-tRNA synthetase family. ProS type 2 subfamily. Homodimer.

It is found in the cytoplasm. The catalysed reaction is tRNA(Pro) + L-proline + ATP = L-prolyl-tRNA(Pro) + AMP + diphosphate. Its function is as follows. Catalyzes the attachment of proline to tRNA(Pro) in a two-step reaction: proline is first activated by ATP to form Pro-AMP and then transferred to the acceptor end of tRNA(Pro). This Wolbachia sp. subsp. Brugia malayi (strain TRS) protein is Proline--tRNA ligase.